We begin with the raw amino-acid sequence, 554 residues long: Dihydroxy-acid dehydratase (554 aa).

A Mg(2+)-binding site is contributed by Asp78. Residue Cys119 participates in [2Fe-2S] cluster binding. The Mg(2+) site is built by Asp120 and Lys121. Position 121 is an N6-carboxylysine (Lys121). Residue Cys192 participates in [2Fe-2S] cluster binding. Glu443 lines the Mg(2+) pocket. The Proton acceptor role is filled by Ser469.

It belongs to the IlvD/Edd family. In terms of assembly, homodimer. [2Fe-2S] cluster is required as a cofactor. Requires Mg(2+) as cofactor.

The catalysed reaction is (2R)-2,3-dihydroxy-3-methylbutanoate = 3-methyl-2-oxobutanoate + H2O. It catalyses the reaction (2R,3R)-2,3-dihydroxy-3-methylpentanoate = (S)-3-methyl-2-oxopentanoate + H2O. It participates in amino-acid biosynthesis; L-isoleucine biosynthesis; L-isoleucine from 2-oxobutanoate: step 3/4. Its pathway is amino-acid biosynthesis; L-valine biosynthesis; L-valine from pyruvate: step 3/4. Functionally, functions in the biosynthesis of branched-chain amino acids. Catalyzes the dehydration of (2R,3R)-2,3-dihydroxy-3-methylpentanoate (2,3-dihydroxy-3-methylvalerate) into 2-oxo-3-methylpentanoate (2-oxo-3-methylvalerate) and of (2R)-2,3-dihydroxy-3-methylbutanoate (2,3-dihydroxyisovalerate) into 2-oxo-3-methylbutanoate (2-oxoisovalerate), the penultimate precursor to L-isoleucine and L-valine, respectively. This is Dihydroxy-acid dehydratase from Clostridium novyi (strain NT).